Reading from the N-terminus, the 856-residue chain is Subtilisin-like protease SBT2.2 (856 aa).

Positions 1–21 (MRRVLMVNFGVLLLFCFGVLS) are cleaved as a signal peptide. Residues 22–159 (NSFGQDNGGD…IVLDFSVRTA (138 aa)) constitute a propeptide, activation peptide. 2 N-linked (GlcNAc...) asparagine glycosylation sites follow: Asn35 and Asn85. Positions 40–159 (VYIVTLRQAS…IVLDFSVRTA (120 aa)) constitute an Inhibitor I9 domain. Positions 164–709 (PQFMGLPKGA…NGFVNATAAL (546 aa)) constitute a Peptidase S8 domain. Residue Asp193 is the Charge relay system of the active site. Asn204 and Asn255 each carry an N-linked (GlcNAc...) asparagine glycan. His269 serves as the catalytic Charge relay system. 5 N-linked (GlcNAc...) asparagine glycosylation sites follow: Asn412, Asn441, Asn495, Asn540, and Asn568. A PA domain is found at 432-528 (MISALDALKN…MDMPGIIIPS (97 aa)). Catalysis depends on Ser634, which acts as the Charge relay system. N-linked (GlcNAc...) asparagine glycosylation is found at Asn704, Asn730, Asn738, Asn748, Asn767, Asn782, and Asn823.

Belongs to the peptidase S8 family.

It is found in the secreted. This is Subtilisin-like protease SBT2.2 from Arabidopsis thaliana (Mouse-ear cress).